Reading from the N-terminus, the 737-residue chain is Relaxin receptor 2 (737 aa).

Topologically, residues 1–399 (MWLLLHVILL…SSSEDLLANG (399 aa)) are extracellular. The region spanning 27–64 (LCPKGYFPCGNLTKCLPRAFHCDGVDDCGNGADEDNCG) is the LDL-receptor class A domain. 3 cysteine pairs are disulfide-bonded: Cys-28–Cys-41, Cys-35–Cys-54, and Cys-48–Cys-63. The N-linked (GlcNAc...) asparagine glycan is linked to Asn-37. Asn-121 is a glycosylation site (N-linked (GlcNAc...) asparagine). LRR repeat units lie at residues 121–142 (NVTLLSLKKNKIHRLPVKVFSR), 145–166 (ELRKIYLQHNCITHISRRAFLG), 169–190 (NLQILYLSHNCITSLRPGIFKD), 193–214 (QLAWLILDDNPITRISQKSFMG), 217–238 (SLFFLSMVGNRLEALPETLCAQ), 241–262 (QLNWVDLANNGIKYITNSTFLT), 265–286 (SLTVLFLPRNQIGFVPEKTFSS), 289–310 (NLGELDLSSNMITKLPVHLFSD), 313–334 (LLQKLNLSSNPLLYVHKNQFGS), and 337–358 (QLQSLDLERIEIPNISTGMFQP). Asn-257 carries N-linked (GlcNAc...) asparagine glycosylation. Residues Asn-318, Asn-350, and Asn-361 are each glycosylated (N-linked (GlcNAc...) asparagine). The chain crosses the membrane as a helical span at residues 400 to 420 (ILRVSVWVIAFITCVGNFLVI). Residues 421 to 438 (AVRSLIKAENTTHAMSIK) are Cytoplasmic-facing. The chain crosses the membrane as a helical span at residues 439 to 459 (ILCCADCLMGVYLFSVGVFDI). The Extracellular portion of the chain corresponds to 460–478 (KYRGQYQKYALLWMESVPC). A disulfide bridge links Cys-478 with Cys-556. A helical membrane pass occupies residues 479-501 (RLLGFLATLSTEVSVLLLTFLTL). Topologically, residues 502 to 520 (EKFLVIVFPFSNLRLGKRQ) are cytoplasmic. A helical transmembrane segment spans residues 521-541 (TAVALASIWVVGFLIAAVPFT). Over 542 to 575 (REDYFGNFYGKNGVCFPLHYDQAEDFGSRGYSLG) the chain is Extracellular. The helical transmembrane segment at 576 to 596 (IFLGVNLLAFLVIVISYVTMF) threads the bilayer. Over 597–622 (CSIHKTALQTAEVRSHIGKEVAVANR) the chain is Cytoplasmic. The chain crosses the membrane as a helical span at residues 623–643 (FFFIVFSDAICWIPVFVVKIL). Residues 644 to 653 (SLLQVEIPGT) are Extracellular-facing. A helical membrane pass occupies residues 654 to 674 (ITSWIVVFFLPVNSALNPILY). The Cytoplasmic segment spans residues 675-737 (TLTTSFFKDK…GDSIMKPVSP (63 aa)).

Belongs to the G-protein coupled receptor 1 family. Expressed in embryonic and adult gonads of males and females, as well in male gubernarculum. Expressed also in brain. Not detected in kidney, spleen and heart.

The protein resides in the cell membrane. In terms of biological role, receptor for relaxin. The activity of this receptor is mediated by G proteins leading to stimulation of adenylate cyclase and an increase of cAMP. May also be a receptor for Leydig insulin-like peptide (INSL3). The sequence is that of Relaxin receptor 2 (Rxfp2) from Mus musculus (Mouse).